Consider the following 776-residue polypeptide: Ion-translocating oxidoreductase complex subunit C (776 aa).

2 4Fe-4S ferredoxin-type domains span residues 368-397 (MGAPQEEQHCIRCSACADACPADLLPQQLY) and 407-436 (KATAHNLADCIECGACAYVCPSNIPLVQYF). The [4Fe-4S] cluster site is built by Cys377, Cys380, Cys383, Cys387, Cys416, Cys419, Cys422, and Cys426. Composition is skewed to basic and acidic residues over residues 534–543 (ARARQAEKVQ), 597–611 (ADEKPAEPIDPRKAA), 633–647 (ADEKPAEPIDPRKAA), 669–683 (ADEKPAEPIDPRKAA), and 705–719 (ADEKPAEPIDPRKAT). The interval 534–754 (ARARQAEKVQ…ENEAEDPRKA (221 aa)) is disordered. Over residues 721–743 (EAAIARAKARKAAQAGERAQAAN) the composition is skewed to low complexity.

This sequence belongs to the 4Fe4S bacterial-type ferredoxin family. RnfC subfamily. In terms of assembly, the complex is composed of six subunits: RnfA, RnfB, RnfC, RnfD, RnfE and RnfG. [4Fe-4S] cluster is required as a cofactor.

Its subcellular location is the cell inner membrane. Its function is as follows. Part of a membrane-bound complex that couples electron transfer with translocation of ions across the membrane. In Cronobacter sakazakii (strain ATCC BAA-894) (Enterobacter sakazakii), this protein is Ion-translocating oxidoreductase complex subunit C.